The chain runs to 313 residues: Ribosomal RNA small subunit methyltransferase H (313 aa).

S-adenosyl-L-methionine is bound by residues 35-37, aspartate 55, phenylalanine 79, aspartate 101, and glutamine 108; that span reads GGH.

It belongs to the methyltransferase superfamily. RsmH family.

It localises to the cytoplasm. It carries out the reaction cytidine(1402) in 16S rRNA + S-adenosyl-L-methionine = N(4)-methylcytidine(1402) in 16S rRNA + S-adenosyl-L-homocysteine + H(+). Specifically methylates the N4 position of cytidine in position 1402 (C1402) of 16S rRNA. In Escherichia coli O127:H6 (strain E2348/69 / EPEC), this protein is Ribosomal RNA small subunit methyltransferase H.